Consider the following 124-residue polypeptide: Holo-[acyl-carrier-protein] synthase (124 aa).

The Mg(2+) site is built by Asp-8 and Glu-57.

The protein belongs to the P-Pant transferase superfamily. AcpS family. Mg(2+) is required as a cofactor.

Its subcellular location is the cytoplasm. The enzyme catalyses apo-[ACP] + CoA = holo-[ACP] + adenosine 3',5'-bisphosphate + H(+). In terms of biological role, transfers the 4'-phosphopantetheine moiety from coenzyme A to a Ser of acyl-carrier-protein. In Leptospira borgpetersenii serovar Hardjo-bovis (strain JB197), this protein is Holo-[acyl-carrier-protein] synthase.